The following is a 716-amino-acid chain: Zinc finger protein 840 (716 aa).

The KRAB domain occupies 42–113; it reads VRFRDVAVVF…EREVTGDPCP (72 aa). 18 consecutive C2H2-type zinc fingers follow at residues 151 to 173, 207 to 229, 235 to 257, 277 to 299, 305 to 327, 333 to 355, 361 to 383, 389 to 411, 417 to 439, 445 to 467, 473 to 495, 501 to 523, 549 to 571, 577 to 599, 605 to 627, 633 to 655, 661 to 683, and 689 to 711; these read YECD…QKIH, FECN…QSMH, YKCD…QRFH, FSCN…LLIH, YTCN…QRTH, HKCD…QKTH, FSCN…QQIH, FICS…KGTH, YQCT…QKTH, FACN…KKIH, YECG…KKIH, FVCN…QRTH, FPCN…QQIH, FTCN…KKIH, and FVCN…QITH. The disordered stretch occupies residues 515 to 548; that stretch reads KLSRHQRTHNKKENSSKSVSNLNKHQKTHAGEKP.

Belongs to the krueppel C2H2-type zinc-finger protein family.

It is found in the nucleus. May be involved in transcriptional regulation. In Homo sapiens (Human), this protein is Zinc finger protein 840 (ZNF840P).